Here is a 229-residue protein sequence, read N- to C-terminus: MNENVIALDGPAGSGKSTVARQIAEKIGFNYLDTGAFYRALTLYLFRLYQTSPNNRFEEWVKTSEAERSLSQIRIVCEFSAGNENRILLDGEDVSLAIRTPEITREIKHIANRRIYRDFVNKELHSLAKLHKLIMDGRDIGTEVFPDAKFKFYLTASSKVRAERRFLQLQEQGIFADRNEIEKEIILRDKSDMEREIAPLYQAKDAILIDTDILSKNSVISKILEILDQ.

10-18 (GPAGSGKST) serves as a coordination point for ATP.

It belongs to the cytidylate kinase family. Type 1 subfamily.

It is found in the cytoplasm. It catalyses the reaction CMP + ATP = CDP + ADP. The enzyme catalyses dCMP + ATP = dCDP + ADP. The chain is Cytidylate kinase from Leptospira interrogans serogroup Icterohaemorrhagiae serovar Lai (strain 56601).